The sequence spans 418 residues: Queuine tRNA-ribosyltransferase accessory subunit 2 (418 aa).

Zn(2+) contacts are provided by cysteine 325, cysteine 327, cysteine 330, and histidine 356.

Belongs to the queuine tRNA-ribosyltransferase family. QTRT2 subfamily. In terms of assembly, heterodimer of a catalytic subunit and an accessory subunit. Requires Zn(2+) as cofactor.

The protein localises to the cytoplasm. Non-catalytic subunit of the queuine tRNA-ribosyltransferase (TGT) that catalyzes the base-exchange of a guanine (G) residue with queuine (Q) at position 34 (anticodon wobble position) in tRNAs with GU(N) anticodons (tRNA-Asp, -Asn, -His and -Tyr), resulting in the hypermodified nucleoside queuosine (7-(((4,5-cis-dihydroxy-2-cyclopenten-1-yl)amino)methyl)-7-deazaguanosine). The protein is Queuine tRNA-ribosyltransferase accessory subunit 2 of Drosophila erecta (Fruit fly).